The following is a 309-amino-acid chain: MPIRVPDELPAVNFLREENVFVMTTSRASGQEIRPLKVLILNLMPKKIETENQFLRLLSNSPLQVDIQLLRIDSRESRNTPAEHLNNFYCNFEDIQEQNFDGLIVTGAPLGLVEFNDVAYWPQIKQVLEWSKDHVTSTLFVCWAVQAALNILYGIPKQTRTDKLSGVYEHHILHPHALLTRGFDDSFLAPHSRYADFPAALIRDYTDLEILAETEEGDAYLFASKDKRIAFVTGHPEYDAQTLAQEYFRDVEAGLDPEVPYNYFPHNDPQNKPRASWRSHGNLLFTNWLNYYVYQITPYDLRHMNPTLD.

The active-site Acyl-thioester intermediate is the Cys142. Residues Lys163 and Ser192 each contribute to the substrate site. The active-site Proton acceptor is His235. Glu237 is an active-site residue. A substrate-binding site is contributed by Arg249.

The protein belongs to the MetA family. Homodimer.

It is found in the cytoplasm. It carries out the reaction L-homoserine + succinyl-CoA = O-succinyl-L-homoserine + CoA. The protein operates within amino-acid biosynthesis; L-methionine biosynthesis via de novo pathway; O-succinyl-L-homoserine from L-homoserine: step 1/1. Functionally, transfers a succinyl group from succinyl-CoA to L-homoserine, forming succinyl-L-homoserine. The protein is Homoserine O-succinyltransferase of Escherichia coli O157:H7.